A 171-amino-acid chain; its full sequence is Putative F-box protein At1g32020 (171 aa).

The region spanning 3–49 is the F-box domain; the sequence is CDRISTLPDHLVAKIVSYLGIKDSIKTSVLSKRWEFVWLKVVGLDLK.

The protein is Putative F-box protein At1g32020 of Arabidopsis thaliana (Mouse-ear cress).